The following is a 365-amino-acid chain: Tartrate dehydrogenase/decarboxylase (365 aa).

Asp-225, Asp-250, and Asp-254 together coordinate Mn(2+).

This sequence belongs to the isocitrate and isopropylmalate dehydrogenases family. As to quaternary structure, homodimer. Mg(2+) serves as cofactor. The cofactor is Mn(2+). It depends on K(+) as a cofactor.

Its subcellular location is the cytoplasm. The enzyme catalyses tartrate + NAD(+) = 2-hydroxy-3-oxosuccinate + NADH + H(+). It catalyses the reaction (2R,3S)-tartrate + NAD(+) = 2-hydroxy-3-oxosuccinate + NADH + H(+). The catalysed reaction is (2R,3R)-tartrate + NAD(+) = 2-hydroxy-3-oxosuccinate + NADH + H(+). It carries out the reaction (2R,3R)-tartrate + H(+) = (R)-glycerate + CO2. The enzyme catalyses (R)-malate + NAD(+) = pyruvate + CO2 + NADH. The protein operates within carbohydrate acid metabolism; tartrate degradation; 2-hydroxy-3-oxosuccinate from L-tartrate: step 1/1. It participates in carbohydrate acid metabolism; tartrate degradation; 2-hydroxy-3-oxosuccinate from meso-tartrate: step 1/1. Its pathway is carbohydrate acid metabolism; tartrate degradation; D-glycerate from L-tartrate: step 1/1. Functionally, has multiple catalytic activities. Apart from catalyzing the oxidation of (+)-tartrate to oxaloglycolate, also converts meso-tartrate to D-glycerate and catalyzes the oxidative decarboxylation of D-malate to pyruvate. In Pseudomonas putida (Arthrobacter siderocapsulatus), this protein is Tartrate dehydrogenase/decarboxylase.